The following is a 609-amino-acid chain: MPISKDKLILILGMVCLEQGHSETLSSIRNPDCGQSLVKPQPQNYFSLFSRIVGGSQVEKGSYPWQVSLKQKQKHICGGTIISSQWVITAAHCMANRNIALTLNVTAGEHDLSQAEPGEQTLAIETIIIHPQFSTRKPMIYDIALLKMAGTFQFGQFVRPVCLPEPGEHFNAGFICTTAGWGRLSEGGRLPQVLQQVNLPILTQEECEAVLLTLKNPITGKTFLCTGSPDGGRDACQGDSGGSLMCQNRKGAWTLAGVTSWGLGCGRSWRNNARKKEQGSPGIFTDLRRVLPWILKHIQTGHRRKSTKALCSEPDGLISGSEGELHFPESLHLYYESKQLCVWTFLVPEDMHMLLNLSHLDIESCHHNYLAMYSLEDRLVGKFCGENLPSSILIGSSSIRLRFISDATDYATGFNLTYKALKPRYHPDSGCRSLTILFEEGTIQSLHYPEDYSNMASCTWIFQAPNYCLIKLSFQSLEIEENGDCSSDYVTVHSDVEKEKEIARFCDYVIPSPVLSSSSVMLISFQSDENGTARGFQADISFISRADLNISISEDESVPLETWDLPPGAMEIFDAERDTHTKPPYEEDIGEMPAIDSGLLKQGERRGKH.

The signal sequence occupies residues 1 to 22 (MPISKDKLILILGMVCLEQGHS). The propeptide at 23–51 (ETLSSIRNPDCGQSLVKPQPQNYFSLFSR) is activation peptide. In terms of domain architecture, Peptidase S1 spans 52 to 299 (IVGGSQVEKG…VLPWILKHIQ (248 aa)). Cysteine 77 and cysteine 93 are oxidised to a cystine. Histidine 92 functions as the Charge relay system in the catalytic mechanism. An N-linked (GlcNAc...) asparagine glycan is attached at asparagine 104. Glutamate 119 serves as a coordination point for Ca(2+). The Charge relay system role is filled by aspartate 142. Disulfide bonds link cysteine 176/cysteine 246, cysteine 207/cysteine 225, cysteine 236/cysteine 265, and cysteine 311/cysteine 341. The active-site Charge relay system is serine 240. 2 CUB domains span residues 311–421 (CSEP…YKAL) and 431–543 (CRSL…ISFI). N-linked (GlcNAc...) asparagine glycosylation is present at asparagine 356. Residues cysteine 365 and cysteine 384 are joined by a disulfide bond. The N-linked (GlcNAc...) asparagine glycan is linked to asparagine 415. Disulfide bonds link cysteine 431–cysteine 458 and cysteine 485–cysteine 506. Asparagine 530 and asparagine 549 each carry an N-linked (GlcNAc...) asparagine glycan. A disordered region spans residues 580–609 (HTKPPYEEDIGEMPAIDSGLLKQGERRGKH).

The protein belongs to the peptidase S1 family. Only expressed in uterus tissue. Expressed in the initial segment (IS) of the caput epididymis, the region most proximal to the testis.

Its subcellular location is the secreted. Functionally, may be required for sperm ADAM3 processing and consequential sperm fertilizing ability. In vitro, has an endopeptidase activity. The polypeptide is Ovochymase-2 (Mus musculus (Mouse)).